The following is a 138-amino-acid chain: Small ribosomal subunit protein uS8 (138 aa).

The protein belongs to the universal ribosomal protein uS8 family. In terms of assembly, part of the 30S ribosomal subunit. Contacts proteins S5 and S12.

One of the primary rRNA binding proteins, it binds directly to 16S rRNA central domain where it helps coordinate assembly of the platform of the 30S subunit. The polypeptide is Small ribosomal subunit protein uS8 (Thermus aquaticus).